The primary structure comprises 137 residues: Large ribosomal subunit protein uL16 (137 aa).

Residues 1-20 are disordered; the sequence is MLQPKRTKFRKQQKMRNRGL.

The protein belongs to the universal ribosomal protein uL16 family. As to quaternary structure, part of the 50S ribosomal subunit.

In terms of biological role, binds 23S rRNA and is also seen to make contacts with the A and possibly P site tRNAs. The protein is Large ribosomal subunit protein uL16 of Francisella philomiragia subsp. philomiragia (strain ATCC 25017 / CCUG 19701 / FSC 153 / O#319-036).